The chain runs to 1936 residues: Potassium channel K1 (1936 aa).

6 helical membrane-spanning segments follow: residues 175–195 (IIIL…YILL), 598–618 (VWII…LWAA), 643–663 (GYIE…GLYF), 670–690 (YIFS…SFIM), 701–721 (TYWF…AEST), and 734–754 (IIII…SGIM). The segment at residues 772 to 788 (FVYFGVITMSTVGYGDY) is an intramembrane region (pore-forming). A helical membrane pass occupies residues 791–811 (VTPAGKCLTMFIIVTCFTFVG). A coiled-coil region spans residues 1141 to 1185 (DTSSMINYKSKSRVNYKMVKGTKNEFIRNQNYNINSIYYANNDNM).

The protein resides in the membrane. It catalyses the reaction K(+)(in) = K(+)(out). Its activity is regulated as follows. Partially inhibited by Ba(2+) and quinine. Probably insensitive to tetraethylammonium (TEA). Its function is as follows. Likely a predominant potassium channel in the erythrocytic stages of parasites. Mediates transmembrane potassium transport. Required for the development of oocysts in the mosquito midgut. This is Potassium channel K1 from Plasmodium berghei (strain Anka).